Consider the following 161-residue polypeptide: Sterile alpha motif domain-containing protein 12 (161 aa).

The segment at 44 to 64 (QKVPDQKGTPKRLQGEAETAK) is disordered. Residues 77–143 (WTQQDVCKWL…LQQVLQLKVR (67 aa)) enclose the SAM domain.

This is Sterile alpha motif domain-containing protein 12 (Samd12) from Mus musculus (Mouse).